Reading from the N-terminus, the 207-residue chain is Ribosomal RNA large subunit methyltransferase E (207 aa).

Residues glycine 49, tryptophan 51, aspartate 69, aspartate 87, and aspartate 111 each coordinate S-adenosyl-L-methionine. Lysine 151 (proton acceptor) is an active-site residue.

This sequence belongs to the class I-like SAM-binding methyltransferase superfamily. RNA methyltransferase RlmE family.

The protein localises to the cytoplasm. The enzyme catalyses uridine(2552) in 23S rRNA + S-adenosyl-L-methionine = 2'-O-methyluridine(2552) in 23S rRNA + S-adenosyl-L-homocysteine + H(+). Specifically methylates the uridine in position 2552 of 23S rRNA at the 2'-O position of the ribose in the fully assembled 50S ribosomal subunit. In Oleidesulfovibrio alaskensis (strain ATCC BAA-1058 / DSM 17464 / G20) (Desulfovibrio alaskensis), this protein is Ribosomal RNA large subunit methyltransferase E.